A 103-amino-acid chain; its full sequence is Protein RALF-like 18 (103 aa).

The first 32 residues, 1-32, serve as a signal peptide directing secretion; that stretch reads MMNNMKLLIIAVMIISAALLPALVVGSRPVKC. A propeptide spans 33 to 58 (removed in mature form); the sequence is DNCMDGGEKEEIMKMSSGVDVSHRIL. A disulfide bond links cysteine 92 and cysteine 98.

The protein belongs to the plant rapid alkalinization factor (RALF) family. In terms of processing, proteolytically cleaved, probably by S1P, a subtilisin-like serine protease (subtilase).

It is found in the secreted. Functionally, cell signaling peptide that may regulate plant stress, growth, and development. Mediates a rapid alkalinization of extracellular space by mediating a transient increase in the cytoplasmic Ca(2+) concentration leading to a calcium-dependent signaling events through a cell surface receptor and a concomitant activation of some intracellular mitogen-activated protein kinases. The polypeptide is Protein RALF-like 18 (RALFL18) (Arabidopsis thaliana (Mouse-ear cress)).